A 356-amino-acid polypeptide reads, in one-letter code: Heat-inducible transcription repressor HrcA (356 aa).

This sequence belongs to the HrcA family.

Functionally, negative regulator of class I heat shock genes (grpE-dnaK-dnaJ and groELS operons). Prevents heat-shock induction of these operons. This Brucella abortus (strain S19) protein is Heat-inducible transcription repressor HrcA.